A 131-amino-acid chain; its full sequence is Large ribosomal subunit protein mL60 (131 aa).

The transit peptide at 1–12 directs the protein to the mitochondrion; that stretch reads MFGPFKLTSPVA.

This sequence belongs to the mitochondrion-specific ribosomal protein mL60 family. Component of the mitochondrial large ribosomal subunit (mt-LSU). Mature yeast 74S mitochondrial ribosomes consist of a small (37S) and a large (54S) subunit. The 37S small subunit contains a 15S ribosomal RNA (15S mt-rRNA) and 34 different proteins. The 54S large subunit contains a 21S rRNA (21S mt-rRNA) and 46 different proteins.

It is found in the mitochondrion. Functionally, component of the mitochondrial ribosome (mitoribosome), a dedicated translation machinery responsible for the synthesis of mitochondrial genome-encoded proteins, including at least some of the essential transmembrane subunits of the mitochondrial respiratory chain. The mitoribosomes are attached to the mitochondrial inner membrane and translation products are cotranslationally integrated into the membrane. This is Large ribosomal subunit protein mL60 (MRPL31) from Saccharomyces cerevisiae (strain ATCC 204508 / S288c) (Baker's yeast).